A 1419-amino-acid chain; its full sequence is Agglutinin-like protein 5 (1419 aa).

Residues 1-17 form the signal peptide; the sequence is MIQQFTLLFLYLSFATA. Cystine bridges form between Cys-73–Cys-150, Cys-96–Cys-112, Cys-205–Cys-298, and Cys-227–Cys-256. ALS repeat units follow at residues 365-396, 401-432, 438-469, 474-505, 510-541, 546-577, 582-613, and 618-649; these read TTIT…VDVP, TTVT…VQVP, TTTT…VREP, VTTT…VREP, VTTT…VKEP, and VTTT…IHDP. 2 disordered regions span residues 652 to 752 and 864 to 885; these read ESSS…SSSS and ASSF…SSDQ. Asn-665 carries N-linked (GlcNAc...) asparagine glycosylation. Asn-919 is a glycosylation site (N-linked (GlcNAc...) asparagine). 5 disordered regions span residues 926–966, 981–1035, 1051–1093, 1134–1177, and 1211–1252; these read SESE…DSST, TGMP…TKSS, TSTL…KESS, EDNE…TTDV, and ATSL…NRLS. Low complexity-rich tracts occupy residues 928–942, 951–966, and 993–1011; these read SESS…ASES, SEST…DSST, and TSDV…PTSA. Over residues 1012–1022 the composition is skewed to polar residues; it reads EQSITDNPNID. Composition is skewed to low complexity over residues 1023 to 1035 and 1051 to 1078; these read SSQT…TKSS and TSTL…GNIN. Composition is skewed to polar residues over residues 1079–1093 and 1138–1160; these read AGSS…KESS and PNTF…SVLS. Positions 1212 to 1230 are enriched in low complexity; sequence TSLRSTSSSSNHATESSGT. 2 N-linked (GlcNAc...) asparagine glycosylation sites follow: Asn-1301 and Asn-1326. Ser-1398 carries the GPI-anchor amidated serine lipid modification. A propeptide spans 1399–1419 (removed in mature form); sequence SATKHPSWLLKFISVALFFFL.

The protein belongs to the ALS family. In terms of assembly, forms homodimers through the tandem repeats. Aggregates in amyloid-like structures, with self-propagating secondary-structure changes, amyloid-characteristic dye binding, and induced birefringence. N-glycosylated and O-glycosylated. Post-translationally, the GPI-anchor is attached to the protein in the endoplasmic reticulum and serves to target the protein to the cell surface. There, the glucosamine-inositol phospholipid moiety is cleaved off and the GPI-modified mannoprotein is covalently attached via its lipidless GPI glycan remnant to the 1,6-beta-glucan of the outer cell wall layer.

The protein resides in the cell membrane. The protein localises to the secreted. Its subcellular location is the cell wall. In terms of biological role, cell surface adhesion protein which mediates both yeast-to-host tissue adherence and yeast aggregation. Plays an important role in the pathogenesis of C.albicans infections. Forms amyloid structures, essential for cell-cell association and cell-substrate adhesion to polystyrene. This is Agglutinin-like protein 5 (ALS5) from Candida albicans (Yeast).